Reading from the N-terminus, the 655-residue chain is p-hydroxybenzoic acid efflux pump subunit AaeB (655 aa).

11 helical membrane-spanning segments follow: residues 13–33 (FAVKLACAIVLALFIGFHFQL), 38–58 (WAVLTAAIVAAGPAFAAGGEP), 69–89 (LRIIGTFIGCIAALIIIISMI), 93–113 (LLMILVCCVWAGFCTWISSLV), 121–141 (WGLSGYTALIIVITIQTEPLL), 152–172 (EIVIGIGCAILADLLFSPRSI), 370–390 (LFWLWTGWTSGNGAMVMIAVV), 407–427 (FIYGTLAALPLGLLYFLVIIP), 431–451 (QSMLLLCLSLAVLGFFIGIEV), 459–479 (MGALASTINIIVLDNPMTFHF), and 482–502 (FLDSALGQIVGCMLAFIVILL).

Belongs to the aromatic acid exporter ArAE (TC 2.A.85) family.

The protein resides in the cell inner membrane. In terms of biological role, forms an efflux pump with AaeA. Could function as a metabolic relief valve, allowing to eliminate certain compounds when they accumulate to high levels in the cell. The polypeptide is p-hydroxybenzoic acid efflux pump subunit AaeB (Salmonella enteritidis PT4 (strain P125109)).